The sequence spans 269 residues: Tryptophan synthase alpha chain (269 aa).

Active-site proton acceptor residues include Glu-49 and Asp-60.

It belongs to the TrpA family. Tetramer of two alpha and two beta chains.

The catalysed reaction is (1S,2R)-1-C-(indol-3-yl)glycerol 3-phosphate + L-serine = D-glyceraldehyde 3-phosphate + L-tryptophan + H2O. It functions in the pathway amino-acid biosynthesis; L-tryptophan biosynthesis; L-tryptophan from chorismate: step 5/5. Functionally, the alpha subunit is responsible for the aldol cleavage of indoleglycerol phosphate to indole and glyceraldehyde 3-phosphate. This chain is Tryptophan synthase alpha chain, found in Pseudomonas fluorescens (strain SBW25).